The following is a 2833-amino-acid chain: Reticulocyte-binding protein 1 (2833 aa).

Positions 1–22 (MKRGICLAALLCLFNYLGAGHG) are cleaved as a signal peptide. The segment covering 75-91 (ETDNASGKDAEGSRPSH) has biased composition (basic and acidic residues). Disordered stretches follow at residues 75 to 95 (ETDN…DSSF), 112 to 133 (HVKE…KENE), and 819 to 860 (KHKQ…NFSR). A compositionally biased stretch (basic and acidic residues) spans 819 to 836 (KHKQNRSEKEEEYFKNES). The span at 837–849 (VEEDLSREETEEQ) shows a compositional bias: acidic residues. The Cell attachment site signature appears at 2563 to 2565 (RGD). Positions 2619 to 2755 (EMNSKKSAIE…GTYQDTSNSS (137 aa)) are disordered. Basic and acidic residues-rich tracts occupy residues 2621–2633 (NSKK…EKTA) and 2640–2652 (ENNR…RARV). Residues 2655–2670 (MSMNNDPTQSETTHSE) show a composition bias toward polar residues. The span at 2706 to 2720 (LEEEETTAPMEETEM) shows a compositional bias: acidic residues. Over residues 2731–2742 (TRSDEPDMHTEN) the composition is skewed to basic and acidic residues. Residues 2743 to 2755 (TQDGTYQDTSNSS) are compositionally biased toward polar residues.

In terms of assembly, homodimer.

It is found in the membrane. Involved in reticulocyte adhesion. Specifically binds to human reticulocyte cells. This Plasmodium vivax (strain Belem) protein is Reticulocyte-binding protein 1 (RBP1).